The following is a 142-amino-acid chain: Peptidyl-prolyl cis-trans isomerase FKBP2 (142 aa).

Residues 1–21 (MRLSWFRVLTVLSICLSAVAT) form the signal peptide. A PPIase FKBP-type domain is found at 49–137 (GDVLHMHYTG…VFEVELLKIE (89 aa)). The Prevents secretion from ER motif lies at 139 to 142 (RTEL).

This sequence belongs to the FKBP-type PPIase family. FKBP2 subfamily. In terms of assembly, interacts with ARFGEF1/BIG1 and the C-terminal of EPB41L2. In terms of tissue distribution, T-cells and thymus.

It localises to the endoplasmic reticulum membrane. The enzyme catalyses [protein]-peptidylproline (omega=180) = [protein]-peptidylproline (omega=0). Its activity is regulated as follows. Inhibited by both FK506 and rapamycin. PPIases accelerate the folding of proteins. It catalyzes the cis-trans isomerization of proline imidic peptide bonds in oligopeptides. The polypeptide is Peptidyl-prolyl cis-trans isomerase FKBP2 (FKBP2) (Homo sapiens (Human)).